Consider the following 370-residue polypeptide: UDP-N-acetylglucosamine--N-acetylmuramyl-(pentapeptide) pyrophosphoryl-undecaprenol N-acetylglucosamine transferase (370 aa).

UDP-N-acetyl-alpha-D-glucosamine contacts are provided by residues 15–17 (TGG), Asn-129, Arg-170, Ser-199, Ile-254, and Gln-299.

Belongs to the glycosyltransferase 28 family. MurG subfamily.

Its subcellular location is the cell inner membrane. The enzyme catalyses di-trans,octa-cis-undecaprenyl diphospho-N-acetyl-alpha-D-muramoyl-L-alanyl-D-glutamyl-meso-2,6-diaminopimeloyl-D-alanyl-D-alanine + UDP-N-acetyl-alpha-D-glucosamine = di-trans,octa-cis-undecaprenyl diphospho-[N-acetyl-alpha-D-glucosaminyl-(1-&gt;4)]-N-acetyl-alpha-D-muramoyl-L-alanyl-D-glutamyl-meso-2,6-diaminopimeloyl-D-alanyl-D-alanine + UDP + H(+). The protein operates within cell wall biogenesis; peptidoglycan biosynthesis. In terms of biological role, cell wall formation. Catalyzes the transfer of a GlcNAc subunit on undecaprenyl-pyrophosphoryl-MurNAc-pentapeptide (lipid intermediate I) to form undecaprenyl-pyrophosphoryl-MurNAc-(pentapeptide)GlcNAc (lipid intermediate II). The protein is UDP-N-acetylglucosamine--N-acetylmuramyl-(pentapeptide) pyrophosphoryl-undecaprenol N-acetylglucosamine transferase of Magnetococcus marinus (strain ATCC BAA-1437 / JCM 17883 / MC-1).